The following is a 921-amino-acid chain: Protein translocase subunit SecA (921 aa).

ATP-binding positions include Gln87, Gly105–Thr109, and Asp501. The disordered stretch occupies residues Pro831–Glu886. Positions Ala872–Val881 are enriched in pro residues. Zn(2+)-binding residues include Cys905, Cys907, Cys916, and His917.

This sequence belongs to the SecA family. Monomer and homodimer. Part of the essential Sec protein translocation apparatus which comprises SecA, SecYEG and auxiliary proteins SecDF-YajC and YidC. The cofactor is Zn(2+).

Its subcellular location is the cell inner membrane. The protein resides in the cytoplasm. The enzyme catalyses ATP + H2O + cellular proteinSide 1 = ADP + phosphate + cellular proteinSide 2.. In terms of biological role, part of the Sec protein translocase complex. Interacts with the SecYEG preprotein conducting channel. Has a central role in coupling the hydrolysis of ATP to the transfer of proteins into and across the cell membrane, serving both as a receptor for the preprotein-SecB complex and as an ATP-driven molecular motor driving the stepwise translocation of polypeptide chains across the membrane. This is Protein translocase subunit SecA from Gluconobacter oxydans (strain 621H) (Gluconobacter suboxydans).